A 324-amino-acid polypeptide reads, in one-letter code: MELLPHEKQVVEYEKTIAEFKEKNKKNSLLSSSEIQKLERRLDKLKEKIYADLTPWERVQICRHPSRPRSVNYIEGMCEEFVELCGDRTFRDDPAVVGGLAKIQGQRFMLIGQEKGCDTSSRMHRNFGMLCPEGFRKALRLAKMAEKFGLSIVFLVDTPGAFPGLTAEERGQGWAIANNLFQLARLKTPIIVLVIGEGCSGGALGMAIGDVIAMLEHSYYSVISPEGCASILWKDPKKNSEAAAMLKMHGEDLKQFAIVDVVIKEPVGGAHHNPAAVYRDVRDFILREWLRLKDLSIEDLLEQRYQKFRTIGLYETSSESSPEA.

One can recognise a CoA carboxyltransferase C-terminal domain in the interval 37–291 (KLERRLDKLK…RDFILREWLR (255 aa)).

It belongs to the AccA family. As to quaternary structure, acetyl-CoA carboxylase is a heterohexamer composed of biotin carboxyl carrier protein (AccB), biotin carboxylase (AccC) and two subunits each of ACCase subunit alpha (AccA) and ACCase subunit beta (AccD).

It is found in the cytoplasm. The catalysed reaction is N(6)-carboxybiotinyl-L-lysyl-[protein] + acetyl-CoA = N(6)-biotinyl-L-lysyl-[protein] + malonyl-CoA. The protein operates within lipid metabolism; malonyl-CoA biosynthesis; malonyl-CoA from acetyl-CoA: step 1/1. Functionally, component of the acetyl coenzyme A carboxylase (ACC) complex. First, biotin carboxylase catalyzes the carboxylation of biotin on its carrier protein (BCCP) and then the CO(2) group is transferred by the carboxyltransferase to acetyl-CoA to form malonyl-CoA. The chain is Acetyl-coenzyme A carboxylase carboxyl transferase subunit alpha from Chlamydia abortus (strain DSM 27085 / S26/3) (Chlamydophila abortus).